Reading from the N-terminus, the 361-residue chain is Holliday junction branch migration complex subunit RuvB (361 aa).

Polar residues-rich tracts occupy residues 1–15 and 28–40; these read MAIKRSGNNNLSPNV and ERSTSPELEQQEA. The segment at 1–41 is disordered; sequence MAIKRSGNNNLSPNVKSDLLSPEVIPQERSTSPELEQQEAS. A large ATPase domain (RuvB-L) region spans residues 13 to 203; it reads PNVKSDLLSP…FGLIQRLRFY (191 aa). Residues Leu-42, Arg-43, Gly-84, Lys-87, Thr-88, Thr-89, 150 to 152, Arg-193, Tyr-203, and Arg-240 contribute to the ATP site; that span reads EDF. Thr-88 contacts Mg(2+). The segment at 204–274 is small ATPAse domain (RuvB-S); sequence EVDELQQIIL…LASEALDLYQ (71 aa). A head domain (RuvB-H) region spans residues 277–361; that stretch reads KRGLDWTDRL…PTPLLPWKES (85 aa). The DNA site is built by Arg-332 and Arg-337.

This sequence belongs to the RuvB family. Homohexamer. Forms an RuvA(8)-RuvB(12)-Holliday junction (HJ) complex. HJ DNA is sandwiched between 2 RuvA tetramers; dsDNA enters through RuvA and exits via RuvB. An RuvB hexamer assembles on each DNA strand where it exits the tetramer. Each RuvB hexamer is contacted by two RuvA subunits (via domain III) on 2 adjacent RuvB subunits; this complex drives branch migration. In the full resolvosome a probable DNA-RuvA(4)-RuvB(12)-RuvC(2) complex forms which resolves the HJ.

The protein resides in the cytoplasm. It carries out the reaction ATP + H2O = ADP + phosphate + H(+). Functionally, the RuvA-RuvB-RuvC complex processes Holliday junction (HJ) DNA during genetic recombination and DNA repair, while the RuvA-RuvB complex plays an important role in the rescue of blocked DNA replication forks via replication fork reversal (RFR). RuvA specifically binds to HJ cruciform DNA, conferring on it an open structure. The RuvB hexamer acts as an ATP-dependent pump, pulling dsDNA into and through the RuvAB complex. RuvB forms 2 homohexamers on either side of HJ DNA bound by 1 or 2 RuvA tetramers; 4 subunits per hexamer contact DNA at a time. Coordinated motions by a converter formed by DNA-disengaged RuvB subunits stimulates ATP hydrolysis and nucleotide exchange. Immobilization of the converter enables RuvB to convert the ATP-contained energy into a lever motion, pulling 2 nucleotides of DNA out of the RuvA tetramer per ATP hydrolyzed, thus driving DNA branch migration. The RuvB motors rotate together with the DNA substrate, which together with the progressing nucleotide cycle form the mechanistic basis for DNA recombination by continuous HJ branch migration. Branch migration allows RuvC to scan DNA until it finds its consensus sequence, where it cleaves and resolves cruciform DNA. Its function is as follows. Participates in UV-tolerance of Synechocystis PCC 6803. The polypeptide is Holliday junction branch migration complex subunit RuvB (Synechocystis sp. (strain ATCC 27184 / PCC 6803 / Kazusa)).